The primary structure comprises 210 residues: Thiamine-phosphate synthase (210 aa).

Residues 39–43 and asparagine 71 contribute to the 4-amino-2-methyl-5-(diphosphooxymethyl)pyrimidine site; that span reads QLREK. Residues aspartate 72 and aspartate 91 each coordinate Mg(2+). Serine 110 contributes to the 4-amino-2-methyl-5-(diphosphooxymethyl)pyrimidine binding site. Position 136–138 (136–138) interacts with 2-[(2R,5Z)-2-carboxy-4-methylthiazol-5(2H)-ylidene]ethyl phosphate; it reads TST. 4-amino-2-methyl-5-(diphosphooxymethyl)pyrimidine is bound at residue lysine 139. 2-[(2R,5Z)-2-carboxy-4-methylthiazol-5(2H)-ylidene]ethyl phosphate is bound by residues glycine 166 and 186–187; that span reads VS.

The protein belongs to the thiamine-phosphate synthase family. Mg(2+) is required as a cofactor.

The enzyme catalyses 2-[(2R,5Z)-2-carboxy-4-methylthiazol-5(2H)-ylidene]ethyl phosphate + 4-amino-2-methyl-5-(diphosphooxymethyl)pyrimidine + 2 H(+) = thiamine phosphate + CO2 + diphosphate. It catalyses the reaction 2-(2-carboxy-4-methylthiazol-5-yl)ethyl phosphate + 4-amino-2-methyl-5-(diphosphooxymethyl)pyrimidine + 2 H(+) = thiamine phosphate + CO2 + diphosphate. The catalysed reaction is 4-methyl-5-(2-phosphooxyethyl)-thiazole + 4-amino-2-methyl-5-(diphosphooxymethyl)pyrimidine + H(+) = thiamine phosphate + diphosphate. It functions in the pathway cofactor biosynthesis; thiamine diphosphate biosynthesis; thiamine phosphate from 4-amino-2-methyl-5-diphosphomethylpyrimidine and 4-methyl-5-(2-phosphoethyl)-thiazole: step 1/1. In terms of biological role, condenses 4-methyl-5-(beta-hydroxyethyl)thiazole monophosphate (THZ-P) and 2-methyl-4-amino-5-hydroxymethyl pyrimidine pyrophosphate (HMP-PP) to form thiamine monophosphate (TMP). This is Thiamine-phosphate synthase from Ruminiclostridium cellulolyticum (strain ATCC 35319 / DSM 5812 / JCM 6584 / H10) (Clostridium cellulolyticum).